A 421-amino-acid chain; its full sequence is Exoskeleton protein RP43 (421 aa).

The signal sequence occupies residues 1 to 24 (MRVIFVISLVSFMFVTWQTNPVHC). Disulfide bonds link cysteine 72–cysteine 104, cysteine 132–cysteine 154, cysteine 193–cysteine 219, cysteine 247–cysteine 269, cysteine 309–cysteine 335, and cysteine 362–cysteine 384. 3 consecutive CUB domains span residues 72 to 191 (CSKP…YSIV), 193 to 306 (CNSL…YSVP), and 309 to 421 (CSVV…YTTG).

In terms of tissue distribution, detected in vestimentum and trunk but not in opisthosome or obturaculum. In the vestimentum, expression is restricted to epithelial cells under apical cuticular plaques.

May play a role in protein-protein interactions during tube assembly. The polypeptide is Exoskeleton protein RP43 (Riftia pachyptila (Vent tube worm)).